Here is a 198-residue protein sequence, read N- to C-terminus: Myb-related protein 340 (198 aa).

2 HTH myb-type domains span residues 10–62 and 63–117; these read DVEV…LNYL and RPDV…IQKH. DNA-binding regions (H-T-H motif) lie at residues 38 to 62 and 90 to 113; these read WNTI…LNYL and WSKI…NRTR.

As to expression, expressed only in flowers.

The protein resides in the nucleus. In terms of biological role, transcription factor. This chain is Myb-related protein 340, found in Antirrhinum majus (Garden snapdragon).